Here is a 305-residue protein sequence, read N- to C-terminus: Oxidoreductase OpS7 (305 aa).

This sequence belongs to the oxidoreductase OpS7 family.

It participates in secondary metabolite biosynthesis. Its function is as follows. Oxidoreductase; part of the gene cluster that mediates the biosynthesis of the bibenzoquinone oosporein, a metabolite required for fungal virulence that acts by evading host immunity to facilitate fungal multiplication in insects. The non-reducing polyketide synthase OpS1 produces orsellinic acid by condensing acetyl-CoA with 3 malonyl-CoA units. Orsellinic acid is then hydroxylated to benzenetriol by the hydroxylase OpS4. The intermediate is oxidized either nonenzymatically to 5,5'-dideoxy-oosporein or enzymatically to benzenetetrol by the oxidoreductase OpS7. The latter is further dimerized to oosporein by the catalase OpS5. OpS6 probably functions en route for protecting cells against oxidative stress by scavenging any leaked free radical form of benzenetetrol by activating the thiol group of glutathione. The chain is Oxidoreductase OpS7 from Beauveria bassiana (strain ARSEF 2860) (White muscardine disease fungus).